The chain runs to 86 residues: Small ribosomal subunit protein bS16 (86 aa).

It belongs to the bacterial ribosomal protein bS16 family.

The protein is Small ribosomal subunit protein bS16 of Xylella fastidiosa (strain M23).